A 1008-amino-acid polypeptide reads, in one-letter code: PAN2-PAN3 deadenylation complex catalytic subunit PAN2 (1008 aa).

WD repeat units follow at residues 29–68 (GQLT…PYSR), 110–149 (PSLG…VTRV), 158–198 (HMAG…FSDV), 200–236 (VQDN…AMAP), and 277–316 (AEVA…SFAE). Residues 314–449 (FAEFSAPTAF…TCTEASMSSK (136 aa)) are linker. Residues 450–755 (KVPRLYRKLE…RTVMMVYAVG (306 aa)) form the USP domain. Residues 808 to 976 (AIDAEFVVLK…EDSHTALLLY (169 aa)) enclose the Exonuclease domain. Residues Asp810, Glu812, Asp915, and Asp968 each contribute to the a divalent metal cation site.

Belongs to the peptidase C19 family. PAN2 subfamily. As to quaternary structure, forms a heterotrimer with an asymmetric homodimer of the regulatory subunit PAN3 to form the poly(A)-nuclease (PAN) deadenylation complex. The cofactor is a divalent metal cation.

Its subcellular location is the cytoplasm. It catalyses the reaction Exonucleolytic cleavage of poly(A) to 5'-AMP.. Positively regulated by the regulatory subunit PAN3. Catalytic subunit of the poly(A)-nuclease (PAN) deadenylation complex, one of two cytoplasmic mRNA deadenylases involved in mRNA turnover. PAN specifically shortens poly(A) tails of RNA and the activity is stimulated by poly(A)-binding protein PAB1. PAN deadenylation is followed by rapid degradation of the shortened mRNA tails by the CCR4-NOT complex. Deadenylated mRNAs are then degraded by two alternative mechanisms, namely exosome-mediated 3'-5' exonucleolytic degradation, or deadenylation-dependent mRNA decaping and subsequent 5'-3' exonucleolytic degradation by XRN1. May also be involved in post-transcriptional maturation of mRNA poly(A) tails. In Yarrowia lipolytica (strain CLIB 122 / E 150) (Yeast), this protein is PAN2-PAN3 deadenylation complex catalytic subunit PAN2.